Reading from the N-terminus, the 154-residue chain is Nitrogen regulatory protein (154 aa).

Residues 6 to 150 (QILTPGRSLV…EALYQIVVDV (145 aa)) form the PTS EIIA type-2 domain. His68 acts as the Tele-phosphohistidine intermediate in catalysis.

Its subcellular location is the cytoplasm. Seems to have a role in regulating nitrogen assimilation. The protein is Nitrogen regulatory protein (ptsN) of Pseudomonas aeruginosa (strain ATCC 15692 / DSM 22644 / CIP 104116 / JCM 14847 / LMG 12228 / 1C / PRS 101 / PAO1).